The sequence spans 463 residues: Cysteine--tRNA ligase (463 aa).

Cys29 is a binding site for Zn(2+). The 'HIGH' region motif lies at 31–41 (PTVYDFAHIGN). The Zn(2+) site is built by Cys227, His252, and Glu256. Residues 285–289 (KMSKS) carry the 'KMSKS' region motif. An ATP-binding site is contributed by Lys288.

It belongs to the class-I aminoacyl-tRNA synthetase family. As to quaternary structure, monomer. Zn(2+) serves as cofactor.

The protein localises to the cytoplasm. The catalysed reaction is tRNA(Cys) + L-cysteine + ATP = L-cysteinyl-tRNA(Cys) + AMP + diphosphate. The sequence is that of Cysteine--tRNA ligase from Rhodopseudomonas palustris (strain BisB5).